A 142-amino-acid chain; its full sequence is Peptide methionine sulfoxide reductase MsrB (142 aa).

Residues 10–132 (EEEWKKVLTP…NSVSLNFKTE (123 aa)) enclose the MsrB domain. Zn(2+) contacts are provided by cysteine 49, cysteine 52, cysteine 98, and cysteine 101. The active-site Nucleophile is cysteine 121.

Belongs to the MsrB Met sulfoxide reductase family. Zn(2+) is required as a cofactor.

It catalyses the reaction L-methionyl-[protein] + [thioredoxin]-disulfide + H2O = L-methionyl-(R)-S-oxide-[protein] + [thioredoxin]-dithiol. In Methanosarcina barkeri (strain Fusaro / DSM 804), this protein is Peptide methionine sulfoxide reductase MsrB.